Here is a 208-residue protein sequence, read N- to C-terminus: Large ribosomal subunit protein uL3 (208 aa).

Belongs to the universal ribosomal protein uL3 family. In terms of assembly, part of the 50S ribosomal subunit. Forms a cluster with proteins L14 and L19.

Functionally, one of the primary rRNA binding proteins, it binds directly near the 3'-end of the 23S rRNA, where it nucleates assembly of the 50S subunit. This is Large ribosomal subunit protein uL3 from Salinibacter ruber (strain DSM 13855 / M31).